A 349-amino-acid chain; its full sequence is Sesquiterpene synthase MAC_05714 (349 aa).

Residues Asp-91 and Asp-96 each coordinate Mg(2+). Positions 91 to 96 match the DDXXXD motif motif; that stretch reads DDLFVD. Arg-184 contacts substrate. Mg(2+) contacts are provided by Asn-230, Ser-234, and Glu-238.

This sequence belongs to the terpene synthase family. The cofactor is Mg(2+).

The enzyme catalyses (2E,6E)-farnesyl diphosphate + H2O = (+)-corvol ether B + diphosphate. The catalysed reaction is (2E,6E)-farnesyl diphosphate + H2O = (+)-corvol ether A + diphosphate. In terms of biological role, terpene synthase that catalyzes the conversion of (2E,6E)-farnesyl diphosphate (FPP) into sesquiterpenes which are important for fungi-environment interactions. Produces a mixture consisting of 8 sesquiterpenes including corvol ethers A and B, as well as traces of epizonarene, gamma-cadinene, delta-cadinene, alpha-cadinene, alpha-cadinol, and an unidentified sesquiterpene. Produces both corvol ether A and corvol ether B in similar concentrations. The sequence is that of Sesquiterpene synthase MAC_05714 from Metarhizium acridum (strain CQMa 102).